We begin with the raw amino-acid sequence, 159 residues long: MLLLSCNLEEDDLKSLLETGASVNAPPDPQEQSPAHLAAGGGLACFLLWQLQTGADLNQQDVLGETPLHKAAKVGSLDCLSLLVASDVQIGVCNKNGQTAEDLAWSYGFPECARFLTMIKCMQTARSSGEQQERDPRAPVLRQKRSFRTVESGVMKRKC.

ANK repeat units follow at residues 1–25 (MLLL…SVNA), 30–59 (QEQS…DLNQ), and 63–92 (LGET…QIGV). A Nuclear localization signal motif is present at residues 130–150 (EQQERDPRAPVLRQKRSFRTV).

Ubiquitinated by the CRL2(FEM1B) complex, leading to its degradation. As to expression, expressed testis, ovary, uterus, kidney, liver, but not in other tissues.

The protein resides in the nucleus. It is found in the cytoplasm. The polypeptide is Ankyrin repeat domain-containing protein 37 (Mus musculus (Mouse)).